We begin with the raw amino-acid sequence, 138 residues long: Cytochrome b5 (138 aa).

One can recognise a Cytochrome b5 heme-binding domain in the interval Gly14–His90. Heme contacts are provided by His49 and His73. A helical membrane pass occupies residues Ser114–Met136.

Belongs to the cytochrome b5 family.

The protein resides in the endoplasmic reticulum membrane. Its subcellular location is the microsome membrane. Functionally, cytochrome b5 is a membrane-bound hemoprotein functioning as an electron carrier for several membrane-bound oxygenases. This is Cytochrome b5 (CYB5A) from Gallus gallus (Chicken).